Consider the following 466-residue polypeptide: Heat stress transcription factor A-5 (466 aa).

A DNA-binding region spans residues 21 to 115 (PAPFLVKTYE…LLKNIHRRKP (95 aa)). A hydrophobic repeat HR-A/B region spans residues 125 to 191 (SSTDQERAVL…KLLNFLETAI (67 aa)). The Bipartite nuclear localization signal signature appears at 198 to 217 (KNFGKKVEQLDISAYNKKRR). 3 disordered regions span residues 215-248 (KRRL…GNIF), 272-300 (HSIQ…LTKR), and 422-466 (TERP…QLTL). Over residues 218 to 233 (LPEVEQSKPPSEDSHL) the composition is skewed to basic and acidic residues. Residues 414–423 (DVFWEQFLTE) carry the AHA motif. Polar residues-rich tracts occupy residues 425 to 438 (PGSS…STYR) and 455 to 466 (LRNTKNIEQLTL). The Nuclear export signal motif lies at 461-466 (IEQLTL).

This sequence belongs to the HSF family. Class A subfamily. As to quaternary structure, homotrimer. In terms of processing, exhibits temperature-dependent phosphorylation.

It localises to the cytoplasm. It is found in the nucleus. In terms of biological role, transcriptional activator that specifically binds DNA sequence 5'-AGAAnnTTCT-3' known as heat shock promoter elements (HSE). This chain is Heat stress transcription factor A-5 (HSFA5), found in Arabidopsis thaliana (Mouse-ear cress).